The primary structure comprises 884 residues: Alanine--tRNA ligase (884 aa).

The Zn(2+) site is built by histidine 572, histidine 576, cysteine 673, and histidine 677.

Belongs to the class-II aminoacyl-tRNA synthetase family. Zn(2+) is required as a cofactor.

It localises to the cytoplasm. The enzyme catalyses tRNA(Ala) + L-alanine + ATP = L-alanyl-tRNA(Ala) + AMP + diphosphate. In terms of biological role, catalyzes the attachment of alanine to tRNA(Ala) in a two-step reaction: alanine is first activated by ATP to form Ala-AMP and then transferred to the acceptor end of tRNA(Ala). Also edits incorrectly charged Ser-tRNA(Ala) and Gly-tRNA(Ala) via its editing domain. This Xylella fastidiosa (strain M12) protein is Alanine--tRNA ligase.